A 349-amino-acid chain; its full sequence is uncharacterized protein (349 aa).

A helical membrane pass occupies residues 16–36 (LVITIISTGLIFGMTLVLTGL). The segment at 111–139 (FGAPEHGPGMPRVSEGRSPSKPDEVAASS) is disordered. The span at 124-134 (SEGRSPSKPDE) shows a compositional bias: basic and acidic residues. 3 consecutive transmembrane segments (helical) span residues 231–251 (ISIVAVLLWIVAVLIVGSVVY), 284–304 (VIALLAAVVGVVLAQVLAPLF), and 307–327 (IVAVPVGAYLALPVAAIVIGL).

The protein belongs to the ABC-4 integral membrane protein family. In terms of assembly, the complex is composed of two ATP-binding proteins (MT0079), two transmembrane proteins (MT0078) and a solute-binding protein.

It is found in the cell membrane. Probably part of an ABC transporter complex. Probably responsible for the translocation of the substrate across the membrane. This is an uncharacterized protein from Mycobacterium tuberculosis (strain CDC 1551 / Oshkosh).